Here is a 208-residue protein sequence, read N- to C-terminus: Germin-like protein subfamily 3 member 1 (208 aa).

The first 18 residues, 1–18, serve as a signal peptide directing secretion; the sequence is MLRTIFLLSLLFALSNAS. A disulfide bridge connects residues Cys23 and Cys38. The Cupin type-1 domain maps to 52–198; sequence SGLGTPGNTT…TTFLDATTVK (147 aa). N-linked (GlcNAc...) asparagine glycosylation occurs at Asn59. The Mn(2+) site is built by His100, His102, Glu107, and His146.

It belongs to the germin family. May not form oligomer. As to expression, expressed during germination, and also in green shoots, etiolated seedlings and whole seedlings.

It is found in the secreted. It localises to the extracellular space. Its subcellular location is the apoplast. Functionally, may play a role in plant defense. Probably has no oxalate oxidase activity even if the active site is conserved. This is Germin-like protein subfamily 3 member 1 (GLP1) from Arabidopsis thaliana (Mouse-ear cress).